A 208-amino-acid polypeptide reads, in one-letter code: Uracil phosphoribosyltransferase (208 aa).

5-phospho-alpha-D-ribose 1-diphosphate is bound by residues R78, R103, and 130-138 (DPMLATGHS). Uracil is bound by residues I193 and 198-200 (GDA). D199 lines the 5-phospho-alpha-D-ribose 1-diphosphate pocket.

It belongs to the UPRTase family. It depends on Mg(2+) as a cofactor.

It catalyses the reaction UMP + diphosphate = 5-phospho-alpha-D-ribose 1-diphosphate + uracil. It functions in the pathway pyrimidine metabolism; UMP biosynthesis via salvage pathway; UMP from uracil: step 1/1. With respect to regulation, allosterically activated by GTP. Its function is as follows. Catalyzes the conversion of uracil and 5-phospho-alpha-D-ribose 1-diphosphate (PRPP) to UMP and diphosphate. This is Uracil phosphoribosyltransferase from Brucella anthropi (strain ATCC 49188 / DSM 6882 / CCUG 24695 / JCM 21032 / LMG 3331 / NBRC 15819 / NCTC 12168 / Alc 37) (Ochrobactrum anthropi).